The chain runs to 433 residues: Serine--tRNA ligase (433 aa).

Position 235 to 237 (235 to 237 (TSE)) interacts with L-serine. 266–268 (RSE) contributes to the ATP binding site. Residue Glu-289 participates in L-serine binding. Residue 353–356 (EISS) coordinates ATP. Residue Ser-388 coordinates L-serine.

The protein belongs to the class-II aminoacyl-tRNA synthetase family. Type-1 seryl-tRNA synthetase subfamily. In terms of assembly, homodimer. The tRNA molecule binds across the dimer.

It is found in the cytoplasm. It carries out the reaction tRNA(Ser) + L-serine + ATP = L-seryl-tRNA(Ser) + AMP + diphosphate + H(+). The enzyme catalyses tRNA(Sec) + L-serine + ATP = L-seryl-tRNA(Sec) + AMP + diphosphate + H(+). Its pathway is aminoacyl-tRNA biosynthesis; selenocysteinyl-tRNA(Sec) biosynthesis; L-seryl-tRNA(Sec) from L-serine and tRNA(Sec): step 1/1. Its function is as follows. Catalyzes the attachment of serine to tRNA(Ser). Is also able to aminoacylate tRNA(Sec) with serine, to form the misacylated tRNA L-seryl-tRNA(Sec), which will be further converted into selenocysteinyl-tRNA(Sec). The sequence is that of Serine--tRNA ligase from Burkholderia pseudomallei (strain 1106a).